A 319-amino-acid chain; its full sequence is Phospho-N-acetylmuramoyl-pentapeptide-transferase (319 aa).

Helical transmembrane passes span 5 to 25 (LIPF…FIGF), 51 to 71 (TMGG…VLIW), 79 to 99 (AWIL…DDGI), 116 to 136 (LGQI…HFAF), 149 to 169 (SFLF…AVNL), 172 to 192 (GLDG…AWIA), 197 to 217 (NWVI…FFIF), 224 to 244 (IFMG…VSIF), 252 to 272 (LLIG…VISF), and 299 to 319 (VDIV…IIWG).

Belongs to the glycosyltransferase 4 family. MraY subfamily. Requires Mg(2+) as cofactor.

It localises to the cell membrane. The catalysed reaction is UDP-N-acetyl-alpha-D-muramoyl-L-alanyl-gamma-D-glutamyl-L-lysyl-D-alanyl-D-alanine + di-trans,octa-cis-undecaprenyl phosphate = Mur2Ac(oyl-L-Ala-gamma-D-Glu-L-Lys-D-Ala-D-Ala)-di-trans,octa-cis-undecaprenyl diphosphate + UMP. It participates in cell wall biogenesis; peptidoglycan biosynthesis. Functionally, catalyzes the initial step of the lipid cycle reactions in the biosynthesis of the cell wall peptidoglycan: transfers peptidoglycan precursor phospho-MurNAc-pentapeptide from UDP-MurNAc-pentapeptide onto the lipid carrier undecaprenyl phosphate, yielding undecaprenyl-pyrophosphoryl-MurNAc-pentapeptide, known as lipid I. This Lactobacillus johnsonii (strain CNCM I-12250 / La1 / NCC 533) protein is Phospho-N-acetylmuramoyl-pentapeptide-transferase.